The primary structure comprises 240 residues: Uridylate kinase (240 aa).

13–16 is a binding site for ATP; sequence KFSG. Gly-55 contacts UMP. The ATP site is built by Gly-56 and Arg-60. Residues Asp-76 and 137 to 144 contribute to the UMP site; that span reads TGNPFFTT. 3 residues coordinate ATP: Thr-164, Tyr-170, and Asp-173.

Belongs to the UMP kinase family. As to quaternary structure, homohexamer.

It localises to the cytoplasm. It carries out the reaction UMP + ATP = UDP + ADP. The protein operates within pyrimidine metabolism; CTP biosynthesis via de novo pathway; UDP from UMP (UMPK route): step 1/1. With respect to regulation, inhibited by UTP. Functionally, catalyzes the reversible phosphorylation of UMP to UDP. The polypeptide is Uridylate kinase (Helicobacter pylori (strain ATCC 700392 / 26695) (Campylobacter pylori)).